The sequence spans 160 residues: 2-C-methyl-D-erythritol 2,4-cyclodiphosphate synthase (160 aa).

Residues D11 and H13 each contribute to the a divalent metal cation site. Residues 11–13 and 37–38 each bind 4-CDP-2-C-methyl-D-erythritol 2-phosphate; these read DIH and HS. H45 is an a divalent metal cation binding site. 4-CDP-2-C-methyl-D-erythritol 2-phosphate contacts are provided by residues 59-61, 135-138, and R145; these read DIG and TTNE.

This sequence belongs to the IspF family. In terms of assembly, homotrimer. It depends on a divalent metal cation as a cofactor.

The catalysed reaction is 4-CDP-2-C-methyl-D-erythritol 2-phosphate = 2-C-methyl-D-erythritol 2,4-cyclic diphosphate + CMP. The protein operates within isoprenoid biosynthesis; isopentenyl diphosphate biosynthesis via DXP pathway; isopentenyl diphosphate from 1-deoxy-D-xylulose 5-phosphate: step 4/6. Its function is as follows. Involved in the biosynthesis of isopentenyl diphosphate (IPP) and dimethylallyl diphosphate (DMAPP), two major building blocks of isoprenoid compounds. Catalyzes the conversion of 4-diphosphocytidyl-2-C-methyl-D-erythritol 2-phosphate (CDP-ME2P) to 2-C-methyl-D-erythritol 2,4-cyclodiphosphate (ME-CPP) with a corresponding release of cytidine 5-monophosphate (CMP). This is 2-C-methyl-D-erythritol 2,4-cyclodiphosphate synthase from Synechococcus elongatus (strain ATCC 33912 / PCC 7942 / FACHB-805) (Anacystis nidulans R2).